Here is a 264-residue protein sequence, read N- to C-terminus: [LysW]-aminoadipate/[LysW]-glutamate kinase (264 aa).

Substrate is bound by residues 35–36, Arg-62, and Asn-167; that span reads GG.

It belongs to the acetylglutamate kinase family. LysZ subfamily.

The protein localises to the cytoplasm. It catalyses the reaction [amino-group carrier protein]-C-terminal-N-(1,4-dicarboxybutan-1-yl)-L-glutamine + ATP = [amino-group carrier protein]-C-terminal-N-(1-carboxy-5-phosphooxy-5-oxopentan-1-yl)-L-glutamine + ADP. It carries out the reaction [amino-group carrier protein]-C-terminal-gamma-(L-glutamyl)-L-glutamate + ATP = [amino-group carrier protein]-C-terminal-gamma-(5-phospho-L-glutamyl)-L-glutamate + ADP. It functions in the pathway amino-acid biosynthesis; L-lysine biosynthesis via AAA pathway; L-lysine from L-alpha-aminoadipate (Thermus route): step 2/5. The protein operates within amino-acid biosynthesis; L-arginine biosynthesis. Involved in both the arginine and lysine biosynthetic pathways. Phosphorylates the LysW-bound precursors glutamate (for arginine biosynthesis), respectively alpha-aminoadipate (for lysine biosynthesis). This is [LysW]-aminoadipate/[LysW]-glutamate kinase from Saccharolobus solfataricus (strain ATCC 35092 / DSM 1617 / JCM 11322 / P2) (Sulfolobus solfataricus).